The primary structure comprises 352 residues: Rhodopsin (352 aa).

Residues Met1–Lys36 lie on the Extracellular side of the membrane. N-linked (GlcNAc...) asparagine glycosylation is found at Asn2 and Asn15. Residues Tyr37 to Val61 traverse the membrane as a helical segment. Residues Thr62 to Asn73 are Cytoplasmic-facing. The chain crosses the membrane as a helical span at residues Tyr74–Tyr96. Residues Thr97–Cys110 are Extracellular-facing. An intrachain disulfide couples Cys110 to Cys187. A helical membrane pass occupies residues Tyr111–Ile133. Residues Glu134–Tyr136 carry the 'Ionic lock' involved in activated form stabilization motif. The Cytoplasmic portion of the chain corresponds to Glu134–His152. Residues Ala153–Val173 form a helical membrane-spanning segment. Residues Gly174–Ser202 are Extracellular-facing. The helical transmembrane segment at Phe203–Gly224 threads the bilayer. Topologically, residues Arg225 to Arg252 are cytoplasmic. Residues Met253–Tyr274 traverse the membrane as a helical segment. Residues Ile275 to Val286 are Extracellular-facing. Residues Phe287–Val308 form a helical membrane-spanning segment. Position 296 is an N6-(retinylidene)lysine (Lys296). Residues Met309–Ala352 are Cytoplasmic-facing. Residues Cys322 and Cys323 are each lipidated (S-palmitoyl cysteine). A disordered region spans residues Glu332–Ala352. A compositionally biased stretch (low complexity) spans Thr335–Ala352.

This sequence belongs to the G-protein coupled receptor 1 family. Opsin subfamily. Contains one covalently linked retinal chromophore. Upon light absorption, the covalently bound 11-cis-retinal is converted to all-trans-retinal. After hydrolysis of the Schiff base and release of the covalently bound all-trans-retinal, active rhodopsin is regenerated by binding of a fresh molecule of 11-cis-retinal. As to expression, expressed in rod-shaped photoreceptor cells in the retina that mediate vision in dim ligh (at protein level).

The protein resides in the membrane. It is found in the cell projection. It localises to the cilium. Its subcellular location is the photoreceptor outer segment. Photoreceptor required for image-forming vision at low light intensity. Required for photoreceptor cell viability after birth. Light-induced isomerization of 11-cis to all-trans retinal triggers a conformational change that activates signaling via G-proteins. Subsequent receptor phosphorylation mediates displacement of the bound G-protein alpha subunit by arrestin and terminates signaling. The sequence is that of Rhodopsin (RHO) from Alligator mississippiensis (American alligator).